Reading from the N-terminus, the 447-residue chain is Signal recognition particle 54 kDa protein (447 aa).

GTP is bound by residues 103–110 (GVQGSGKT), 185–189 (DTAGR), and 245–248 (TKMD).

This sequence belongs to the GTP-binding SRP family. SRP54 subfamily. Part of the signal recognition particle protein translocation system, which is composed of SRP and FtsY. Archaeal SRP consists of a 7S RNA molecule of 300 nucleotides and two protein subunits: SRP54 and SRP19.

It is found in the cytoplasm. The catalysed reaction is GTP + H2O = GDP + phosphate + H(+). Functionally, involved in targeting and insertion of nascent membrane proteins into the cytoplasmic membrane. Binds to the hydrophobic signal sequence of the ribosome-nascent chain (RNC) as it emerges from the ribosomes. The SRP-RNC complex is then targeted to the cytoplasmic membrane where it interacts with the SRP receptor FtsY. In Saccharolobus islandicus (strain Y.G.57.14 / Yellowstone #1) (Sulfolobus islandicus), this protein is Signal recognition particle 54 kDa protein.